Consider the following 380-residue polypeptide: tRNA-specific 2-thiouridylase MnmA (380 aa).

ATP is bound by residues 12-19 (GLSGGVDS) and Met-38. The interaction with target base in tRNA stretch occupies residues 108-110 (NPD). Cys-113 (nucleophile) is an active-site residue. Cysteines 113 and 210 form a disulfide. Residue Gly-138 participates in ATP binding. Positions 160-162 (KDQ) are interaction with tRNA. Residue Cys-210 is the Cysteine persulfide intermediate of the active site.

The protein belongs to the MnmA/TRMU family.

The protein resides in the cytoplasm. It catalyses the reaction S-sulfanyl-L-cysteinyl-[protein] + uridine(34) in tRNA + AH2 + ATP = 2-thiouridine(34) in tRNA + L-cysteinyl-[protein] + A + AMP + diphosphate + H(+). Functionally, catalyzes the 2-thiolation of uridine at the wobble position (U34) of tRNA, leading to the formation of s(2)U34. In Ureaplasma urealyticum serovar 10 (strain ATCC 33699 / Western), this protein is tRNA-specific 2-thiouridylase MnmA.